We begin with the raw amino-acid sequence, 557 residues long: Dihydroxy-acid dehydratase (557 aa).

Mg(2+) is bound at residue Asp78. Cys119 lines the [2Fe-2S] cluster pocket. Residues Asp120 and Lys121 each contribute to the Mg(2+) site. Residue Lys121 is modified to N6-carboxylysine. Cys191 is a binding site for [2Fe-2S] cluster. Glu442 lines the Mg(2+) pocket. The active-site Proton acceptor is Ser468.

This sequence belongs to the IlvD/Edd family. Homodimer. The cofactor is [2Fe-2S] cluster. Mg(2+) is required as a cofactor.

It carries out the reaction (2R)-2,3-dihydroxy-3-methylbutanoate = 3-methyl-2-oxobutanoate + H2O. The catalysed reaction is (2R,3R)-2,3-dihydroxy-3-methylpentanoate = (S)-3-methyl-2-oxopentanoate + H2O. Its pathway is amino-acid biosynthesis; L-isoleucine biosynthesis; L-isoleucine from 2-oxobutanoate: step 3/4. It participates in amino-acid biosynthesis; L-valine biosynthesis; L-valine from pyruvate: step 3/4. In terms of biological role, functions in the biosynthesis of branched-chain amino acids. Catalyzes the dehydration of (2R,3R)-2,3-dihydroxy-3-methylpentanoate (2,3-dihydroxy-3-methylvalerate) into 2-oxo-3-methylpentanoate (2-oxo-3-methylvalerate) and of (2R)-2,3-dihydroxy-3-methylbutanoate (2,3-dihydroxyisovalerate) into 2-oxo-3-methylbutanoate (2-oxoisovalerate), the penultimate precursor to L-isoleucine and L-valine, respectively. The sequence is that of Dihydroxy-acid dehydratase from Lachnoclostridium phytofermentans (strain ATCC 700394 / DSM 18823 / ISDg) (Clostridium phytofermentans).